A 246-amino-acid chain; its full sequence is UPF0758 protein SSU98_1084 (246 aa).

The MPN domain occupies 103–225 (RILGSEKLGR…YYSFREESDV (123 aa)). Zn(2+) contacts are provided by H174, H176, and D187. The short motif at 174-187 (HNHPSGSVQPSRND) is the JAMM motif element.

The protein belongs to the UPF0758 family.

This is UPF0758 protein SSU98_1084 from Streptococcus suis (strain 98HAH33).